A 559-amino-acid chain; its full sequence is Formate--tetrahydrofolate ligase (559 aa).

Threonine 68 to threonine 75 is a binding site for ATP.

The protein belongs to the formate--tetrahydrofolate ligase family.

The catalysed reaction is (6S)-5,6,7,8-tetrahydrofolate + formate + ATP = (6R)-10-formyltetrahydrofolate + ADP + phosphate. It functions in the pathway one-carbon metabolism; tetrahydrofolate interconversion. This Rhizobium etli (strain ATCC 51251 / DSM 11541 / JCM 21823 / NBRC 15573 / CFN 42) protein is Formate--tetrahydrofolate ligase.